The primary structure comprises 699 residues: Receptor-type tyrosine-protein phosphatase epsilon (699 aa).

The signal sequence occupies residues 1–19; sequence MEPFCPLLLASFSLSLARA. Low complexity predominate over residues 20–36; sequence GQGNDTTPTESNWTSTT. Positions 20-40 are disordered; sequence GQGNDTTPTESNWTSTTAGPP. The Extracellular portion of the chain corresponds to 20–45; that stretch reads GQGNDTTPTESNWTSTTAGPPDPGAS. Residues Asn-23 and Asn-31 are each glycosylated (N-linked (GlcNAc...) asparagine). The helical transmembrane segment at 46–68 threads the bilayer; that stretch reads QPLLTWLLLPLLLLLFLLAAYFF. Residues 69–699 are Cytoplasmic-facing; the sequence is RFRKQRKAVV…DIFSDYANFK (631 aa). Tyrosine-protein phosphatase domains are found at residues 134–393 and 425–688; these read FREE…LLEY and LEEE…VQDF. Substrate contacts are provided by residues Asp-302, 334-340, and Gln-378; that span reads CSAGVGR. Cys-334 (phosphocysteine intermediate) is an active-site residue. Cys-629 (phosphocysteine intermediate) is an active-site residue. Tyr-695 carries the phosphotyrosine modification.

The protein belongs to the protein-tyrosine phosphatase family. Receptor class 4 subfamily. In terms of assembly, monomer. Isoform 2: Homodimer. Can form oligomers. Dimerization is increased by oxidative stress and decreased by EGFR. Isoform 2 interacts with GRB2. A catalytically active cytoplasmic form (p65) is produced by proteolytic cleavage of either isoform 1, isoform 2 or isoform 3. In terms of processing, phosphorylated on tyrosine residues by tyrosine kinase Neu. Post-translationally, glycosylated. As to expression, isoform 2 is expressed in the spleen and thymus (at protein level). Detected in fibroblasts, myeloid cells, macrophages, and T-cells but not in B-cell lines. Isoform 1 and isoform 2 are expressed predominantly in the brain, testes, and lungs, with lower levels present in lymph nodes, thymus, spleen, heart and mammary glands. Isoform 1 is expressed in osteoclasts and not in osteoblasts and its expression is related to osteoclast differentiation. It is also expressed in the erythrocytes. Isoform 2 is strongly expressed in skeletal muscle and L6 skeletal muscle cell line.

Its subcellular location is the cell membrane. It is found in the cytoplasm. It carries out the reaction O-phospho-L-tyrosyl-[protein] + H2O = L-tyrosyl-[protein] + phosphate. Its activity is regulated as follows. Inhibited by alendronate (ALN), orthovanadate, and phenylarsine oxide (PAO). In terms of biological role, acts as a negative regulator of insulin receptor (IR) signaling and is involved in insulin-induced glucose metabolism mainly through direct dephosphorylation and inactivation of IR in hepatocytes and liver. Plays a critical role in signaling transduction pathways and phosphoprotein network topology in red blood cells. May play a role in osteoclast formation and function. Functionally, acts as a negative regulator of insulin receptor (IR) signaling in skeletal muscle. Regulates insulin-induced tyrosine phosphorylation of insulin receptor (IR) and insulin receptor substrate 1 (IRS-1), phosphorylation of protein kinase B and glycogen synthase kinase-3 and insulin induced stimulation of glucose uptake. Its function is as follows. Isoform 1 and isoform 2 act as a negative regulator of FceRI-mediated signal transduction leading to cytokine production and degranulation, most likely by acting at the level of SYK to affect downstream events such as phosphorylation of SLP76 and LAT and mobilization of Ca(2+). This chain is Receptor-type tyrosine-protein phosphatase epsilon (Ptpre), found in Mus musculus (Mouse).